We begin with the raw amino-acid sequence, 543 residues long: Headcase protein homolog (543 aa).

Disordered stretches follow at residues methionine 1 to glycine 26 and methionine 197 to alanine 283. Basic and acidic residues-rich tracts occupy residues methionine 197–threonine 211 and proline 235–serine 250. Serine 264 and serine 268 each carry phosphoserine.

As to expression, expressed in all tissues examined. Highest levels are in the spleen, thymus, peripheral blood and heart. Lowest in the kidney and pancreas.

Its function is as follows. May play an important role in some human cancers. May be part of the regulatory mechanism in the development of epithelial tube networks such as the circulatory system and lungs. This chain is Headcase protein homolog (HECA), found in Homo sapiens (Human).